A 126-amino-acid polypeptide reads, in one-letter code: Histone H2B 7 (126 aa).

Low complexity predominate over residues 1–12 (MPEPAKSAPAPK). The tract at residues 1–35 (MPEPAKSAPAPKKGSKKAVTKTQKKGDKKRKRARK) is disordered. K6 and K13 each carry N6-acetyllysine. Residues 13-34 (KGSKKAVTKTQKKGDKKRKRAR) show a composition bias toward basic residues. S15 is modified (phosphoserine). 2 positions are modified to N6-acetyllysine: K16 and K21. S113 is a glycosylation site (O-linked (GlcNAc) serine). A Glycyl lysine isopeptide (Lys-Gly) (interchain with G-Cter in ubiquitin) cross-link involves residue K121.

The protein belongs to the histone H2B family. In terms of assembly, the nucleosome is a histone octamer containing two molecules each of H2A, H2B, H3 and H4 assembled in one H3-H4 heterotetramer and two H2A-H2B heterodimers. The octamer wraps approximately 147 bp of DNA. In terms of processing, monoubiquitination of Lys-121 by the BRE1 gives a specific tag for epigenetic transcriptional activation and is also prerequisite for histone H3 'Lys-4' and 'Lys-79' methylation. Phosphorylated on Ser-15 during apoptosis; which facilitates apoptotic chromatin condensation. Post-translationally, glcNAcylation at Ser-113 promotes monoubiquitination of Lys-121. It fluctuates in response to extracellular glucose, and associates with transcribed genes.

The protein localises to the nucleus. It localises to the chromosome. Core component of nucleosome. Nucleosomes wrap and compact DNA into chromatin, limiting DNA accessibility to the cellular machineries which require DNA as a template. Histones thereby play a central role in transcription regulation, DNA repair, DNA replication and chromosomal stability. DNA accessibility is regulated via a complex set of post-translational modifications of histones, also called histone code, and nucleosome remodeling. In Gallus gallus (Chicken), this protein is Histone H2B 7 (H2B-VII).